The following is a 300-amino-acid chain: Enoyl-CoA hydratase domain-containing protein 3, mitochondrial (300 aa).

Residues 1–66 (MALVAGLRAF…RNIVLSNPRR (66 aa)) constitute a mitochondrion transit peptide. The segment at 32–54 (SPGSARPAGPESEPRLTSTRQQD) is disordered. K110 is modified (N6-succinyllysine).

It belongs to the enoyl-CoA hydratase/isomerase family.

It is found in the mitochondrion. In terms of biological role, may play a role in fatty acid biosynthesis and insulin sensitivity. The polypeptide is Enoyl-CoA hydratase domain-containing protein 3, mitochondrial (Rattus norvegicus (Rat)).